The sequence spans 302 residues: 33 kDa chaperonin (302 aa).

Disulfide bonds link C240–C242 and C273–C276.

The protein belongs to the HSP33 family. Post-translationally, under oxidizing conditions two disulfide bonds are formed involving the reactive cysteines. Under reducing conditions zinc is bound to the reactive cysteines and the protein is inactive.

The protein localises to the cytoplasm. Its function is as follows. Redox regulated molecular chaperone. Protects both thermally unfolding and oxidatively damaged proteins from irreversible aggregation. Plays an important role in the bacterial defense system toward oxidative stress. The sequence is that of 33 kDa chaperonin from Synechocystis sp. (strain ATCC 27184 / PCC 6803 / Kazusa).